The following is a 301-amino-acid chain: MIYLHAIDPIAFSLGPVKVHWYGLMYLASFGAAWCLGRQRIQAGRLLGVNMDGFSDLLFYAMMGVVLGGRVGYMLFYAFHDFLQEPLLLFRVWEGGMSFHGGLIGVLLAVAWWSRRHRLQMFDVLDFGAPLVPVGLGFGRLGNFIGGELWGKLTHNGWGVIFPRAPLSDVPAGQLAMQDVMNFVQIQEHYAAGLLGHYARHPSQLYEAFLEGLVMFIVLWLFSRKPRPRYAVSGLFALLYGVFRFLVEFVRMPDNGVYVAFGWLTRGQILSLPLIVIGLFLFWLSCRSPVLQPVPAPEVAK.

4 helical membrane-spanning segments follow: residues 10–30, 57–77, 92–112, and 119–139; these read IAFS…LASF, LLFY…MLFY, VWEG…AVAW, and LQMF…LGFG. R140 contacts a 1,2-diacyl-sn-glycero-3-phospho-(1'-sn-glycerol). 3 consecutive transmembrane segments (helical) span residues 202–222, 230–250, and 264–284; these read PSQL…LWLF, YAVS…VEFV, and LTRG…LFWL.

The protein belongs to the Lgt family.

The protein localises to the cell inner membrane. It catalyses the reaction L-cysteinyl-[prolipoprotein] + a 1,2-diacyl-sn-glycero-3-phospho-(1'-sn-glycerol) = an S-1,2-diacyl-sn-glyceryl-L-cysteinyl-[prolipoprotein] + sn-glycerol 1-phosphate + H(+). It participates in protein modification; lipoprotein biosynthesis (diacylglyceryl transfer). Catalyzes the transfer of the diacylglyceryl group from phosphatidylglycerol to the sulfhydryl group of the N-terminal cysteine of a prolipoprotein, the first step in the formation of mature lipoproteins. This chain is Phosphatidylglycerol--prolipoprotein diacylglyceryl transferase, found in Xylella fastidiosa (strain 9a5c).